A 462-amino-acid chain; its full sequence is Cysteine--tRNA ligase (462 aa).

C27 contacts Zn(2+). Positions 29-39 (PTVYDLAHIGN) match the 'HIGH' region motif. 3 residues coordinate Zn(2+): C211, H236, and E240. The 'KMSKS' region signature appears at 270 to 274 (KMSKS). K273 serves as a coordination point for ATP.

The protein belongs to the class-I aminoacyl-tRNA synthetase family. As to quaternary structure, monomer. Zn(2+) serves as cofactor.

The protein resides in the cytoplasm. It carries out the reaction tRNA(Cys) + L-cysteine + ATP = L-cysteinyl-tRNA(Cys) + AMP + diphosphate. The protein is Cysteine--tRNA ligase of Anaplasma phagocytophilum (strain HZ).